The sequence spans 312 residues: MIEFEKPIITKIDENKDYGRFVIEPLERGYGTTLGNSLRRVLLSSLPGAAVTSIKIDGVLHEFDTIPGVREDVMQIILNVKGLAVKSYVEDEKIIELDVEGPAEITAGDILTDSDIEIVNPDHYLFTIAEGHSLKATMTVAKNRGYVPAEGNKKDDVPVGTLAVDSIYTPVKKVNYQVEPARVGSNDGFDKLTIEIMTNGTIIPEDALGLSARVLIEHLNLFTDLTEVAKATEVMKETEKVNDEKVLDRTIEELDLSVRSYNCLKRAGINTVFDLTEKTEPEMMKVRNLGRKSLEEVKIKLADLGLGLKNDK.

The interval 1–226 (MIEFEKPIIT…EHLNLFTDLT (226 aa)) is alpha N-terminal domain (alpha-NTD). The tract at residues 242–312 (NDEKVLDRTI…DLGLGLKNDK (71 aa)) is alpha C-terminal domain (alpha-CTD).

It belongs to the RNA polymerase alpha chain family. As to quaternary structure, homodimer. The RNAP catalytic core consists of 2 alpha, 1 beta, 1 beta' and 1 omega subunit. When a sigma factor is associated with the core the holoenzyme is formed, which can initiate transcription.

It catalyses the reaction RNA(n) + a ribonucleoside 5'-triphosphate = RNA(n+1) + diphosphate. DNA-dependent RNA polymerase catalyzes the transcription of DNA into RNA using the four ribonucleoside triphosphates as substrates. The protein is DNA-directed RNA polymerase subunit alpha of Streptococcus agalactiae serotype Ia (strain ATCC 27591 / A909 / CDC SS700).